A 60-amino-acid polypeptide reads, in one-letter code: Large ribosomal subunit protein bL32 (60 aa).

The segment covering 1 to 23 has biased composition (basic residues); the sequence is MAKHPVPKKKTSKSKRDMRRSHH. A disordered region spans residues 1–26; that stretch reads MAKHPVPKKKTSKSKRDMRRSHHALV.

This sequence belongs to the bacterial ribosomal protein bL32 family.

In Deinococcus geothermalis (strain DSM 11300 / CIP 105573 / AG-3a), this protein is Large ribosomal subunit protein bL32.